The primary structure comprises 400 residues: Canavanine gamma-lyase (400 aa).

Residue Lys213 is modified to N6-(pyridoxal phosphate)lysine.

Belongs to the trans-sulfuration enzymes family. Requires pyridoxal 5'-phosphate as cofactor.

The catalysed reaction is L-canavanine + H2O = N-hydroxyguanidine + L-homoserine. Its function is as follows. Lyase involved in the degradation of canavanine, the delta-oxa-analog of arginine, allowing growth on canavanine as sole nitrogen and carbon source. Catalyzes the elimination of hydroxyguanidine from canavanine with a subsequent water addition to yield homoserine. Is highly specific for canavanine and cannot use methionine, cystathionine or arginine. The protein is Canavanine gamma-lyase of Pseudomonas canavaninivorans.